A 1442-amino-acid polypeptide reads, in one-letter code: DNA polymerase III PolC-type (1442 aa).

The Exonuclease domain occupies 426 to 582 (YVVFDVETTG…YDTEATAYIF (157 aa)).

Belongs to the DNA polymerase type-C family. PolC subfamily.

The protein resides in the cytoplasm. The catalysed reaction is DNA(n) + a 2'-deoxyribonucleoside 5'-triphosphate = DNA(n+1) + diphosphate. Its function is as follows. Required for replicative DNA synthesis. This DNA polymerase also exhibits 3' to 5' exonuclease activity. This is DNA polymerase III PolC-type from Staphylococcus epidermidis (strain ATCC 12228 / FDA PCI 1200).